We begin with the raw amino-acid sequence, 216 residues long: Somatotropin (216 aa).

The signal sequence occupies residues 1-26; that stretch reads MAAGPRTSMLLAFALLCLPWTQEVGA. Zn(2+) is bound at residue H45. The cysteines at positions 78 and 189 are disulfide-linked. Residue S131 is modified to Phosphoserine. E198 is a binding site for Zn(2+). C206 and C214 are disulfide-bonded.

The protein belongs to the somatotropin/prolactin family.

Its subcellular location is the secreted. In terms of biological role, plays an important role in growth control. Its major role in stimulating body growth is to stimulate the liver and other tissues to secrete IGF1. It stimulates both the differentiation and proliferation of myoblasts. It also stimulates amino acid uptake and protein synthesis in muscle and other tissues. This is Somatotropin (GH1) from Delphinus delphis (Short-beaked common dolphin).